Here is a 1838-residue protein sequence, read N- to C-terminus: MDVHTRWKAARPGALLLSSPLLLFLLLLWAPPSSRAAQPADLLEMLDFHNLPSGVTKTTGFCATRRSSSEPDVAYRVSKDAQLSMPTKQLYPESGFPEDFSILTTVKAKKGSQAFLVSIYNEQGIQQLGLELGRSPVFLYEDHTGKPGPEEYPLFPGINLSDGKWHRIALSVYKKNVTLILDCKKKITKFLSRSDHPIIDTNGIVMFGSRILDDEIFEGDIQQLLFVSDNRAAYDYCEHYSPDCDTAVPDTPQSQDPNPDEYYPEGEGETYYYEYPYYEDPEDPGKEPAPTQKPVEAARETTEVPEEQTQPLPEAPTVPETSDTADKEDSLGIGDYDYVPPDDYYTPPPYEDFGYGEGVENPDQPTNPDSGAEVPTSTTVTSNTSNPAPGEGKDDLGGEFTEETIKNLEENYYDPYFDPDSDSSVSPSEIGPGMPANQDTIFEGIGGPRGEKGQKGEPAIIEPGMLIEGPPGPEGPAGLPGPPGTTGPTGQMGDPGERGPPGRPGLPGADGLPGPPGTMLMLPFRFGGGGDAGSKGPMVSAQESQAQAILQQARLALRGPAGPMGLTGRPGPMGPPGSGGLKGEPGDMGPQGPRGVQGPPGPTGKPGRRGRAGSDGARGMPGQTGPKGDRGFDGLAGLPGEKGHRGDPGPSGPPGIPGDDGERGDDGEVGPRGLPGEPGPRGLLGPKGPPGPPGPPGVTGMDGQPGPKGNVGPQGEPGPPGQQGNPGAQGLPGPQGAIGPPGEKGPLGKPGLPGMPGADGPPGHPGKEGPPGEKGGQGPPGPQGPIGYPGPRGVKGADGIRGLKGTKGEKGEDGFPGFKGDMGIKGDRGEIGPPGPRGEDGPEGPKGRGGPNGDPGPLGPTGEKGKLGVPGLPGYPGRQGPKGSIGFPGFPGANGEKGGRGTPGKPGPRGQRGPTGPRGERGPRGITGKPGPKGNSGGDGPAGPPGERGPNGPQGPTGFPGPKGPPGPPGKDGLPGHPGQRGETGFQGKTGPPGPPGVVGPQGPTGETGPMGERGHPGPPGPPGEQGLPGAAGKEGTKGDPGPAGLPGKDGPPGLRGFPGDRGLPGPVGALGLKGSEGPPGPPGPAGSPGERGPAGAAGPIGIPGRPGPQGPPGPAGEKGLPGEKGPQGPAGRDGLQGPVGLPGPAGPVGPPGEDGDKGEIGEPGQKGSKGDKGEQGPPGPTGPQGPIGQPGPSGADGEPGPRGQQGLFGQKGDEGSRGFPGPPGPVGLQGLPGPPGEKGETGDVGQMGPPGPPGPRGPSGAPGADGPQGPPGGIGNPGAVGEKGEPGEAGDPGLPGEGGPLGPKGERGEKGEAGPSGAAGPPGPKGPPGDDGPKGSPGPVGFPGDPGPPGEPGPAGQDGPPGDKGDDGEPGQTGSPGPTGEPGPSGPPGKRGPPGPAGPEGRQGEKGAKGEAGLEGPPGKTGPIGPQGAPGKPGPDGLRGIPGPVGEQGLPGSPGPDGPPGPMGPPGLPGLKGDSGPKGEKGHPGLIGLIGPPGEQGEKGDRGLPGPQGSSGPKGDQGITGPSGPLGPPGPPGLPGPPGPKGAKGSSGPTGPKGEAGHPGLPGPPGPPGEVIQPLPIQASRTRRNIDASQLLDDGAGESYVDYADGMEEIFGSLNSLKLEIEQMKRPLGTQQNPARTCKDLQLCHPDFPDGEYWVDPNQGCSRDSFKVYCNFTAGGSTCVFPDKKSEGARITSWPKENPGSWFSEFKRGKLLSYVDAEGNPVGVVQMTFLRLLSASAHQNVTYNCYQSVAWQDAATGSYDKAIRFLGSNDEEMSYDNNPYIRALVDGCATKKGYQKTVLEIDTPKVEQVPIVDIMFNDFGEASQKFGFEVGPACFLG.

Residues 1-36 (MDVHTRWKAARPGALLLSSPLLLFLLLLWAPPSSRA) form the signal peptide. The region spanning 72 to 244 (DVAYRVSKDA…DYCEHYSPDC (173 aa)) is the Laminin G-like domain. Residues 231–443 (RAAYDYCEHY…MPANQDTIFE (213 aa)) form a nonhelical region region. 5 positions are modified to sulfotyrosine: Tyr234, Tyr236, Tyr240, Tyr262, and Tyr263. Disordered stretches follow at residues 242 to 545 (PDCD…QESQ) and 559 to 1574 (GPAG…EVIQ). Acidic residues predominate over residues 258-268 (NPDEYYPEGEG). Low complexity-rich tracts occupy residues 335–345 (DYDYVPPDDYY), 374–387 (VPTSTTVTSNTSNP), 413–428 (YDPYFDPDSDSSVSPS), and 460–469 (IIEPGMLIEG). Positions 444–558 (GIGGPRGEKG…ILQQARLALR (115 aa)) are interrupted collagenous region. Positions 470–485 (PPGPEGPAGLPGPPGT) are enriched in pro residues. Composition is skewed to low complexity over residues 506 to 523 (LPGADGLPGPPGTMLMLP) and 559 to 570 (GPAGPMGLTGRP). The interval 559–1570 (GPAGPMGLTG…GLPGPPGPPG (1012 aa)) is triple-helical region. 3 positions are modified to 4-hydroxyproline: Pro570, Pro576, and Pro621. At Lys627 the chain carries 5-hydroxylysine. 4-hydroxyproline is present on Pro639. A 5-hydroxylysine modification is found at Lys642. 4-hydroxyproline occurs at positions 648, 654, 657, 675, and 678. Residues 671-686 (PRGLPGEPGPRGLLGP) show a composition bias toward low complexity. 3-hydroxyproline is present on residues Pro680 and Pro686. Over residues 687–696 (KGPPGPPGPP) the composition is skewed to pro residues. 4-hydroxyproline occurs at positions 690, 696, and 705. Lys708 carries the 5-hydroxylysine modification. Residues Pro717, Pro720, Pro726, and Pro732 each carry the 4-hydroxyproline modification. Over residues 722 to 741 (QQGNPGAQGLPGPQGAIGPP) the composition is skewed to low complexity. A 5-hydroxylysine modification is found at Lys744. A compositionally biased stretch (low complexity) spans 747-756 (LGKPGLPGMP). 4-hydroxyproline occurs at positions 750, 756, 762, 765, and 771. The residue at position 774 (Lys774) is a 5-hydroxylysine. 4-hydroxyproline is present on residues Pro780 and Pro789. 4 positions are modified to 5-hydroxylysine: Lys795, Lys804, Lys807, and Lys810. Position 816 is a 4-hydroxyproline (Pro816). Lys819 carries the post-translational modification 5-hydroxylysine. 4-hydroxyproline is present on Pro834. Residues 837-846 (RGEDGPEGPK) show a composition bias toward basic and acidic residues. Lys846 and Lys864 each carry 5-hydroxylysine. Pro870, Pro873, and Pro876 each carry 4-hydroxyproline. 5-hydroxylysine is present on Lys882. 2 positions are modified to 4-hydroxyproline: Pro888 and Pro891. Lys897 is modified (5-hydroxylysine). A 4-hydroxyproline mark is found at Pro903 and Pro906. Over residues 908–917 (PRGQRGPTGP) the composition is skewed to low complexity. 4-hydroxyproline occurs at positions 930 and 945. Composition is skewed to low complexity over residues 971 to 990 (KDGLPGHPGQRGETGFQGKT) and 999 to 1011 (VGPQGPTGETGPM). 4-hydroxyproline occurs at positions 1017, 1020, 1023, and 1029. The segment covering 1088 to 1104 (SPGERGPAGAAGPIGIP) has biased composition (low complexity). Positions 1106–1115 (RPGPQGPPGP) are enriched in pro residues. Pro1221 and Pro1224 each carry 4-hydroxyproline. Over residues 1259–1268 (PSGAPGADGP) the composition is skewed to low complexity. Over residues 1294 to 1303 (GLPGEGGPLG) the composition is skewed to gly residues. Composition is skewed to pro residues over residues 1380-1398 (TGEPGPSGPPGKRGPPGPA) and 1454-1469 (SPGPDGPPGPMGPPGL). A 4-hydroxyproline mark is found at Pro1467 and Pro1470. The span at 1485 to 1494 (PGLIGLIGPP) shows a compositional bias: low complexity. The segment covering 1526-1541 (PLGPPGPPGLPGPPGP) has biased composition (pro residues). Positions 1542–1554 (KGAKGSSGPTGPK) are enriched in low complexity. Positions 1571-1605 (EVIQPLPIQASRTRRNIDASQLLDDGAGESYVDYA) are nonhelical region. A sulfotyrosine mark is found at Tyr1601 and Tyr1604. The Fibrillar collagen NC1 domain occupies 1609–1837 (EEIFGSLNSL…GFEVGPACFL (229 aa)).

It belongs to the fibrillar collagen family. In terms of assembly, trimers of two alpha 1(V) and one alpha 2(V) chains in most tissues and trimers of one alpha 1(V), one alpha 2(V), and one alpha 3(V) chains in placenta. Interacts with CSPG4. Hydroxylation on proline residues within the sequence motif, GXPG, is most likely to be 4-hydroxy as this fits the requirement for 4-hydroxylation in vertebrates. Post-translationally, sulfated on 40% of tyrosines. As to expression, widely expressed. Isoform 2 is more highly expressed in liver, kidney and lung.

It is found in the secreted. The protein localises to the extracellular space. It localises to the extracellular matrix. Its function is as follows. Type V collagen is a member of group I collagen (fibrillar forming collagen). It is a minor connective tissue component of nearly ubiquitous distribution. Type V collagen binds to DNA, heparan sulfate, thrombospondin, heparin, and insulin. Transcriptionally activated by CEBPZ, which recognizes a CCAAT-like motif, CAAAT in the COL5A1 promoter. This chain is Collagen alpha-1(V) chain (Col5a1), found in Mus musculus (Mouse).